A 112-amino-acid chain; its full sequence is UPF0235 protein RHE_CH03912 (112 aa).

It belongs to the UPF0235 family.

The chain is UPF0235 protein RHE_CH03912 from Rhizobium etli (strain ATCC 51251 / DSM 11541 / JCM 21823 / NBRC 15573 / CFN 42).